The sequence spans 227 residues: Leucyl/phenylalanyl-tRNA--protein transferase (227 aa).

Belongs to the L/F-transferase family.

It localises to the cytoplasm. The enzyme catalyses N-terminal L-lysyl-[protein] + L-leucyl-tRNA(Leu) = N-terminal L-leucyl-L-lysyl-[protein] + tRNA(Leu) + H(+). The catalysed reaction is N-terminal L-arginyl-[protein] + L-leucyl-tRNA(Leu) = N-terminal L-leucyl-L-arginyl-[protein] + tRNA(Leu) + H(+). It catalyses the reaction L-phenylalanyl-tRNA(Phe) + an N-terminal L-alpha-aminoacyl-[protein] = an N-terminal L-phenylalanyl-L-alpha-aminoacyl-[protein] + tRNA(Phe). Its function is as follows. Functions in the N-end rule pathway of protein degradation where it conjugates Leu, Phe and, less efficiently, Met from aminoacyl-tRNAs to the N-termini of proteins containing an N-terminal arginine or lysine. The chain is Leucyl/phenylalanyl-tRNA--protein transferase from Desulfotalea psychrophila (strain LSv54 / DSM 12343).